A 144-amino-acid polypeptide reads, in one-letter code: MFLNTIGARDGSRPEKKRVGRGIGSTLGKTCGRGHKGQKARAGGFHKVGFEGGQMPLQRRLPKVGFRSAKKRFVAEVTLTQISKVGGGVIGLAELKEAGLVPTEAKRVKIIATGSVGGVVTVRGVGVTRGARAAIEAAGGKVES.

Residues Met-1–Ser-25 form a disordered region.

It belongs to the universal ribosomal protein uL15 family. As to quaternary structure, part of the 50S ribosomal subunit.

Functionally, binds to the 23S rRNA. The chain is Large ribosomal subunit protein uL15 from Methylococcus capsulatus (strain ATCC 33009 / NCIMB 11132 / Bath).